Here is a 262-residue protein sequence, read N- to C-terminus: Virulence plasmid protein pGP6-D-related protein (262 aa).

The protein belongs to the UPF0137 (pGP6-D) family.

The sequence is that of Virulence plasmid protein pGP6-D-related protein from Chlamydia muridarum (strain MoPn / Nigg).